A 439-amino-acid polypeptide reads, in one-letter code: Ribosomal protein uS12 methylthiotransferase RimO (439 aa).

The MTTase N-terminal domain occupies 3–115; the sequence is KKLHLISLGC…IDQMVRERQG (113 aa). 6 residues coordinate [4Fe-4S] cluster: C12, C46, C78, C147, C151, and C154. Residues 133–362 form the Radical SAM core domain; the sequence is TGSSVHAYVK…DKIIQKQHRA (230 aa).

The protein belongs to the methylthiotransferase family. RimO subfamily. It depends on [4Fe-4S] cluster as a cofactor.

Its subcellular location is the cytoplasm. The catalysed reaction is L-aspartate(89)-[ribosomal protein uS12]-hydrogen + (sulfur carrier)-SH + AH2 + 2 S-adenosyl-L-methionine = 3-methylsulfanyl-L-aspartate(89)-[ribosomal protein uS12]-hydrogen + (sulfur carrier)-H + 5'-deoxyadenosine + L-methionine + A + S-adenosyl-L-homocysteine + 2 H(+). Its function is as follows. Catalyzes the methylthiolation of an aspartic acid residue of ribosomal protein uS12. This Wolinella succinogenes (strain ATCC 29543 / DSM 1740 / CCUG 13145 / JCM 31913 / LMG 7466 / NCTC 11488 / FDC 602W) (Vibrio succinogenes) protein is Ribosomal protein uS12 methylthiotransferase RimO.